The following is a 220-amino-acid chain: NAD(P)H-hydrate epimerase (220 aa).

One can recognise a YjeF N-terminal domain in the interval 6 to 203; the sequence is ARHLTTLATG…SFDLPEALFH (198 aa). Residue 53 to 57 participates in (6S)-NADPHX binding; it reads HNGGV. 2 residues coordinate K(+): Asn54 and Asp116. (6S)-NADPHX is bound by residues 120-126 and Asp149; that span reads GMRLEGP. Thr152 contacts K(+).

It belongs to the NnrE/AIBP family. It depends on K(+) as a cofactor.

It carries out the reaction (6R)-NADHX = (6S)-NADHX. The catalysed reaction is (6R)-NADPHX = (6S)-NADPHX. Its function is as follows. Catalyzes the epimerization of the S- and R-forms of NAD(P)HX, a damaged form of NAD(P)H that is a result of enzymatic or heat-dependent hydration. This is a prerequisite for the S-specific NAD(P)H-hydrate dehydratase to allow the repair of both epimers of NAD(P)HX. This chain is NAD(P)H-hydrate epimerase, found in Truepera radiovictrix (strain DSM 17093 / CIP 108686 / LMG 22925 / RQ-24).